The sequence spans 324 residues: Bile salt hydrolase/transferase (324 aa).

The active-site Nucleophile; acyl-thioester intermediate is the Cys-2. Deoxycholate contacts are provided by Cys-2 and Arg-16. Asn-79 is a taurine binding site.

This sequence belongs to the peptidase C59 family. Homotetramer. The tetramer consists of a dimer of dimers.

It carries out the reaction glycocholate + H2O = cholate + glycine. It catalyses the reaction glycodeoxycholate + H2O = deoxycholate + glycine. The enzyme catalyses chenodeoxycholate + glycine = glycochenodeoxycholate + H2O. The catalysed reaction is cholate + taurine = taurocholate + H2O. It carries out the reaction taurodeoxycholate + H2O = deoxycholate + taurine. It catalyses the reaction taurochenodeoxycholate + H2O = chenodeoxycholate + taurine. The enzyme catalyses an L-alpha-amino acid + cholate = an N-choloyl-L-alpha-amino acid + H2O. The catalysed reaction is an L-alpha-amino acid + taurocholate = an N-choloyl-L-alpha-amino acid + taurine. It carries out the reaction glycocholate + an L-alpha-amino acid = an N-choloyl-L-alpha-amino acid + glycine. The protein operates within lipid metabolism; bile acid biosynthesis. Functionally, possesses dual functions in bile acid metabolism. Acts as a bile salt hydrolase that catalyzes the deconjugation of glycine- and taurine-linked bile salts, which occurs naturally in the intestines of animals, releasing amino acid residues and deconjugated bile salts (bile acids). Can hydrolyze the amide bond in the bile salts glycocholate (GCA), glycodeoxycholate (GDCA), glycochenodeoxycholate (GCDCA), taurocholate (TCA), taurodeoxycholate (TDCA) and taurochenodeoxycholate (TCDCA). Shows a preference for glycine-conjugated bile acids as substrates. Also acts as an amine N-acyltransferase that conjugates a wide variety of amino acids to conjugated and non-conjugated bile acids, thus producing bacterial bile acid amidates (BBAAs) - also named microbially conjugated bile acids (MCBAs) - in the gastrointestinal tract. These BBAAs may facilitate communication between the microbiota and host through the activation of host ligand-activated transcription factors. The protein is Bile salt hydrolase/transferase of Lactiplantibacillus plantarum (strain ATCC BAA-793 / NCIMB 8826 / WCFS1) (Lactobacillus plantarum).